The following is a 70-amino-acid chain: MKPNIHPEYKNITLTCSTCEKKHIFGSTAKKSSVDVCSNCHPFFTGDRSIQRTTGRVDRFNRRLTKSAEK.

It belongs to the bacterial ribosomal protein bL31 family. Type A subfamily. In terms of assembly, part of the 50S ribosomal subunit.

Its function is as follows. Binds the 23S rRNA. The polypeptide is Large ribosomal subunit protein bL31 (Mycoplasma mobile (strain ATCC 43663 / 163K / NCTC 11711) (Mesomycoplasma mobile)).